Reading from the N-terminus, the 542-residue chain is CTP synthase (542 aa).

The tract at residues 1-265 (MTRYIFVTGG…DDFVVERFGL (265 aa)) is amidoligase domain. Residue Ser13 participates in CTP binding. Ser13 is a UTP binding site. ATP contacts are provided by residues 14–19 (SLGKGI) and Asp71. Mg(2+)-binding residues include Asp71 and Glu139. CTP is bound by residues 146-148 (DIE), 186-191 (KTKPTQ), and Lys222. UTP contacts are provided by residues 186–191 (KTKPTQ) and Lys222. One can recognise a Glutamine amidotransferase type-1 domain in the interval 290–541 (TIAMVGKYME…VKAALAQKNK (252 aa)). Gly351 lines the L-glutamine pocket. Catalysis depends on Cys378, which acts as the Nucleophile; for glutamine hydrolysis. Residues 379–382 (LGMQ), Glu402, and Arg469 each bind L-glutamine. Catalysis depends on residues His514 and Glu516.

This sequence belongs to the CTP synthase family. Homotetramer.

The catalysed reaction is UTP + L-glutamine + ATP + H2O = CTP + L-glutamate + ADP + phosphate + 2 H(+). The enzyme catalyses L-glutamine + H2O = L-glutamate + NH4(+). It catalyses the reaction UTP + NH4(+) + ATP = CTP + ADP + phosphate + 2 H(+). Its pathway is pyrimidine metabolism; CTP biosynthesis via de novo pathway; CTP from UDP: step 2/2. With respect to regulation, allosterically activated by GTP, when glutamine is the substrate; GTP has no effect on the reaction when ammonia is the substrate. The allosteric effector GTP functions by stabilizing the protein conformation that binds the tetrahedral intermediate(s) formed during glutamine hydrolysis. Inhibited by the product CTP, via allosteric rather than competitive inhibition. Catalyzes the ATP-dependent amination of UTP to CTP with either L-glutamine or ammonia as the source of nitrogen. Regulates intracellular CTP levels through interactions with the four ribonucleotide triphosphates. The protein is CTP synthase of Pseudomonas putida (strain W619).